A 743-amino-acid chain; its full sequence is Probable TonB-dependent siderophore receptor PiuA (743 aa).

Positions 1–28 (MSLIRTRKKIVSSAIASSLSMIATTAMA) are cleaved as a signal peptide. The TBDR plug domain maps to 61–167 (PLLDTPKSVS…VGGSINMISK (107 aa)). The 572-residue stretch at 172-743 (GDFLEGSVAA…SAVLAVNFKY (572 aa)) folds into the TBDR beta-barrel domain. Intrachain disulfides connect C408–C416 and C627–C632.

This sequence belongs to the TonB-dependent receptor family.

The protein resides in the cell outer membrane. In terms of biological role, probably involved in the initial step of iron uptake by binding iron chelating siderophores, thereby allowing extraction of iron from the environment. May bind the siderophore, ferric enterobactin, with micromolar affinity. This chain is Probable TonB-dependent siderophore receptor PiuA, found in Acinetobacter baumannii (strain ATCC 19606 / DSM 30007 / JCM 6841 / CCUG 19606 / CIP 70.34 / NBRC 109757 / NCIMB 12457 / NCTC 12156 / 81).